Reading from the N-terminus, the 342-residue chain is DNA repair protein RAD51 homolog 1 (342 aa).

Residues 1–24 (MTTMEQRRNQNAVQQQDDEETQHG) are disordered. A HhH domain is found at 51–80 (TVEGVAYTPRKDLLQIKGISDAKVDKIVEA). A FtsK domain is found at 100 to 314 (QEIIQITSGS…LRKGRAEERI (215 aa)). Residue 130–137 (GEFRSGKT) participates in ATP binding.

The protein belongs to the RecA family. RAD51 subfamily. As to quaternary structure, self-associates and interacts with XRCC3. Binds to RAD54/CHR25. Interacts with BRCA2A and BRCA2B. Can form a tripartite complex with both BRCA2B and DSS1(I). In terms of tissue distribution, detected in various tissues. Higher expression in reproductive tissues than in vegetative tissues, with the highest expression level in young flower buds. At cellular level, is expressed at low levels in flower primordia, then at higher levels in young anthers and at highest levels in both females and males meiocytes. Not detected in gametophytes.

Its subcellular location is the nucleus. Functionally, binds to single and double-stranded DNA and exhibits DNA-dependent ATPase activity. Unwinds duplex DNA. Component of the meiotic recombination pathway. Seems to play a role in mediating chromosome homology search, chromosome pairing and synapsis at early stages and probably chromosome crossing-over at later stages in meiosis. Probably is involved in the repair of meiotic double strand breaks (DBSs) generated by AtSPO11-1 and in homologous recombination. Its function is dispensable for vegetative growth and root mitosis. This Arabidopsis thaliana (Mouse-ear cress) protein is DNA repair protein RAD51 homolog 1.